Consider the following 446-residue polypeptide: Citrate/sodium symporter (446 aa).

Residues 1–27 (MTNMSQPPATEKKGVSDLLGFKIFGMP) are Cytoplasmic-facing. The chain crosses the membrane as a helical span at residues 28-44 (LPLYAFALITLLLSHFY). The Periplasmic portion of the chain corresponds to 45–50 (NALPTD). The helical transmembrane segment at 51 to 71 (IVGGFAIMFIIGAIFGEIGKR) threads the bilayer. Over 72-80 (LPIFNKYIG) the chain is Cytoplasmic. Residues 81-95 (GAPVMIFLVAAYFVY) form a helical membrane-spanning segment. Over 96–115 (AGIFTQKEIDAISNVMDKSN) the chain is Periplasmic. A helical membrane pass occupies residues 116–130 (FLNLFIAVLITGAIL). Topologically, residues 131–136 (SVNRRL) are cytoplasmic. Residues 137 to 166 (LLKSLLGYIPTILMGIVGASIFGIAIGLVF) form a helical membrane-spanning segment. Topologically, residues 167–181 (GIPVDRIMMLYVLPI) are periplasmic. Na(+) is bound by residues isoleucine 181 and glycine 183. Residues 182–189 (MGGGNGAG) constitute an intramembrane region (helical). Positions 186 and 187 each coordinate citrate. At 190 to 212 (AVPLSEIYHSVTGRSREEYYSTA) the chain is on the periplasmic side. A helical membrane pass occupies residues 213–233 (IAILTIANIFAIVFAAVLDII). Residues 234-264 (GKKHTWLSGEGELVRKASFKVEEDEKTGQIT) lie on the Cytoplasmic side of the membrane. A helical transmembrane segment spans residues 265–287 (HRETAVGLVLSTTCFLLAYVVAK). The Periplasmic portion of the chain corresponds to 288–299 (KILPSIGGVAIH). The helical transmembrane segment at 300–315 (YFAWMVLIVAALNASG) threads the bilayer. The Cytoplasmic portion of the chain corresponds to 316 to 327 (LCSPEIKAGAKR). A helical membrane pass occupies residues 328-351 (LSDFFSKQLLWVLMVGVGVCYTDL). Residues 352–359 (QEIINAIT) lie on the Periplasmic side of the membrane. Residues 360-381 (FANVVIAAIIVIGAVLGAAIGG) traverse the membrane as a helical segment. Residues 382–398 (WLMGFFPIESAITAGLC) lie on the Cytoplasmic side of the membrane. 2 residues coordinate Na(+): methionine 399 and asparagine 401. An intramembrane region (helical) is located at residues 399 to 406 (MANRGGSG). Residues arginine 402, glycine 404, and serine 405 each contribute to the citrate site. Over 407–416 (DLEVLSACNR) the chain is Cytoplasmic. A helical transmembrane segment spans residues 417–438 (MNLISYAQISSRLGGGIVLVIA). Arginine 428 serves as a coordination point for citrate. Over 439-446 (SIVFGMMI) the chain is Periplasmic.

This sequence belongs to the 2-hydroxycarboxylate transporter (2-HCT) (TC 2.A.24) family. Homodimer.

It localises to the cell inner membrane. The enzyme catalyses citrate(out) + 2 Na(+)(out) = citrate(in) + 2 Na(+)(in). Its activity is regulated as follows. In the absence of Na(+), transport is inhibited by the thiol reagents N-ethylmaleimide (NEM) and the methanethiosulfonate (MTS) derivatives MTSEA, MTSET and MTSES. However, inactivation by NEM, MTSES and MTSET is prevented by the presence of Na(+). In the absence of Na(+), the substrate citrate has no effect on the inactivation by permeable or impermeable thiol reagents. In contrast, when subsaturating concentrations of Na(+) are present, citrate significantly reduces inactivation, suggesting ordered binding of the substrate and co-ion; citrate is bound after Na(+). The membrane impermeable bulky maleimide AmdiS does not inactivate the transporter in right-side-out membrane vesicles. The apparent affinity for Na(+) decreases with increasing proton concentration. Protons cannot replace Na(+) in the translocation step but the decrease in apparent affinity for Na(+) towards lower pH suggests that protons can compete with Na(+) for the cation-binding sites. Its function is as follows. Secondary active transporter that catalyzes the uptake of citrate across the membrane with the concomitant uptake of sodium. There are conflicting data regarding exact substrate stoichiometry: the sodium/citrate stoichiometry was predicted to be 1, but the latest studies suggest that CitS transports citrate in symport with 2 sodium ions. Transports citrate as a divalent citrate anion, H-citrate(2-). Shows narrow substrate specificity and is very specific, transporting only citrate and to a low extent citromalate. Symport of Na(+) is absolutely required in the range pH 5-7 because no uptake can be detected in the absence of Na(+). Lithium can replace Na(+) in the symport reaction but it takes about a 200-fold higher concentration of Li(+) over Na(+) to achieve the same rate of uptake. This Klebsiella pneumoniae protein is Citrate/sodium symporter.